Reading from the N-terminus, the 186-residue chain is UPF0301 protein Sfri_2850 (186 aa).

The protein belongs to the UPF0301 (AlgH) family.

The polypeptide is UPF0301 protein Sfri_2850 (Shewanella frigidimarina (strain NCIMB 400)).